The sequence spans 232 residues: tRNA (guanine-N(7)-)-methyltransferase (232 aa).

S-adenosyl-L-methionine is bound by residues Glu-63, Glu-88, Asp-115, and Asp-137. Residue Asp-137 is part of the active site. Substrate contacts are provided by residues Lys-141, Asp-173, and 211-214 (TRYE).

It belongs to the class I-like SAM-binding methyltransferase superfamily. TrmB family.

The enzyme catalyses guanosine(46) in tRNA + S-adenosyl-L-methionine = N(7)-methylguanosine(46) in tRNA + S-adenosyl-L-homocysteine. The protein operates within tRNA modification; N(7)-methylguanine-tRNA biosynthesis. Its function is as follows. Catalyzes the formation of N(7)-methylguanine at position 46 (m7G46) in tRNA. This Rhizobium meliloti (strain 1021) (Ensifer meliloti) protein is tRNA (guanine-N(7)-)-methyltransferase.